We begin with the raw amino-acid sequence, 197 residues long: Probable GTP-binding protein EngB (197 aa).

The EngB-type G domain maps to 25 to 197 (SAPEIAFAGR…VRDEFFKFTR (173 aa)). GTP is bound by residues 33-40 (GRSNVGKS), 60-64 (GCTRQ), 79-82 (DLPG), 146-149 (TKID), and 177-179 (ISV). The Mg(2+) site is built by Ser40 and Thr62.

Belongs to the TRAFAC class TrmE-Era-EngA-EngB-Septin-like GTPase superfamily. EngB GTPase family. It depends on Mg(2+) as a cofactor.

Functionally, necessary for normal cell division and for the maintenance of normal septation. The polypeptide is Probable GTP-binding protein EngB (Wolbachia sp. subsp. Brugia malayi (strain TRS)).